Consider the following 1173-residue polypeptide: Alpha-mannosidase 2 (1173 aa).

The tract at residues 1–21 is disordered; the sequence is MPFSSYIGNSRRSSTGGGTGG. Residues 1 to 50 are Cytoplasmic-facing; the sequence is MPFSSYIGNSRRSSTGGGTGGWGQSLLPTALSKSKLAINRKPRKRTLVVN. The helical; Signal-anchor transmembrane segment at 51–71 threads the bilayer; that stretch reads FIFANFFVIALTVSLLFFLLT. Over 72–1173 the chain is Lumenal; that stretch reads LFHFGVPGPI…AYKLELRPHK (1102 aa). An N-linked (GlcNAc...) asparagine glycan is attached at Asn-106. His-162 and Asp-164 together coordinate Zn(2+). N-linked (GlcNAc...) asparagine glycosylation occurs at Asn-262. Zn(2+) is bound at residue Asp-276. The Nucleophile role is filled by Asp-276. An N-linked (GlcNAc...) asparagine glycan is attached at Asn-467. His-564 lines the Zn(2+) pocket. N-linked (GlcNAc...) asparagine glycosylation is found at Asn-675, Asn-772, Asn-782, Asn-991, Asn-1098, and Asn-1108.

The protein belongs to the glycosyl hydrolase 38 family. Homodimer; disulfide-linked. Interacts with GALT1. Requires Zn(2+) as cofactor. In terms of processing, glycosylated.

Its subcellular location is the golgi apparatus membrane. The enzyme catalyses N(4)-{beta-D-GlcNAc-(1-&gt;2)-alpha-D-Man-(1-&gt;3)-[alpha-D-Man-(1-&gt;3)-[alpha-D-Man-(1-&gt;6)]-alpha-D-Man-(1-&gt;6)]-beta-D-Man-(1-&gt;4)-beta-D-GlcNAc-(1-&gt;4)-beta-D-GlcNAc}-L-asparaginyl-[protein] + 2 H2O = 2 alpha-D-mannopyranose + an N(4)-{beta-D-GlcNAc-(1-&gt;2)-alpha-D-Man-(1-&gt;3)-[alpha-D-Man-(1-&gt;6)]-beta-D-Man-(1-&gt;4)-beta-D-GlcNAc-(1-&gt;4)-beta-D-GlcNAc}-L-asparaginyl-[protein]. Its pathway is protein modification; protein glycosylation. With respect to regulation, inhibited by 1 mM Cu(2+) and by the class II alpha-mannosidase inhibitor swainsonine. Functionally, catalyzes the first committed step in the biosynthesis of complex N-glycans. It controls conversion of high mannose to complex N-glycans; the final hydrolytic step in the N-glycan maturation pathway. Converts GlcNAcMan(5)GlcNAc(2) (Man5Gn) into GlcNAcMan(3)GlcNAc(2) (MGn) by sequential removal of two alpha1,6- and alpha1,3-linked mannose residues from the alpha1,6-mannose branch of the substrate. To a lesser extent, also able to cleave beta1,2-xylosylated Man5Gn-glycopeptide (Man5GnX-GP) and pyridylaminated substrates Man5Gn-PA and Man5GnX-PA, but not active toward Man5-glycopeptide. Required for resistance to salt stress. This is Alpha-mannosidase 2 from Arabidopsis thaliana (Mouse-ear cress).